Consider the following 543-residue polypeptide: Protein DETOXIFICATION 47, chloroplastic (543 aa).

A chloroplast-targeting transit peptide spans 1-30 (MLIKSQRLTLFSPLLSKTRRIPVNSHQTLV). A coiled-coil region spans residues 55–94 (VIRRRIKLERVTRNCVRIDREIDEEEEEEEKERGDLVKQS). Helical transmembrane passes span 107-127 (GPAMGMWICGPLMSLIDTVVI), 135-155 (LAALGPGTVLCDHMSYVFMFL), 181-201 (VLLFIGLVCGLMMLLLTRLFG), 228-248 (GLAWPFILVGLVAQSASLGMK), 256-276 (ALAAATIINGLGDTILCLFLG), 278-298 (GIAGAAWATTASQIVSAYMMM), 319-339 (LWKISALAAPVFISIFSKIAF), 342-362 (FIIYCATSMGTHVLAAHQVMA), 406-426 (IIGATLGLVLGVIGTAVPGLF), 443-463 (LLIPFFMALSALPMTVSLEGT), 472-492 (FVSSVMSSSFIIGCLTLMFVT), and 497-517 (GLLGCWFVLVGFQWGRFGLYL).

It belongs to the multi antimicrobial extrusion (MATE) (TC 2.A.66.1) family. In terms of tissue distribution, preferentially expressed in the epidermal cells.

It is found in the plastid. The protein localises to the chloroplast membrane. Functions as a multidrug and toxin extrusion transporter in the export of salicylic acid (SA) from the chloroplast to the cytoplasm. Plays an essential function in plant defense via the pathogen-induced salicylic acid (SA) accumulation. Also acts as a key component of the Age-related resistance (ARR) pathway. In Arabidopsis thaliana (Mouse-ear cress), this protein is Protein DETOXIFICATION 47, chloroplastic.